The sequence spans 549 residues: MAELTIPADDIQSAIEEYVSSFTADTSREEVGTVVDAGDGIAHVEGLPSVMTQELLEFPGGILGVALNLDEHSVGAVILGDFENIEEGQQVKRTGEVLSVPVGDGFLGRVVNPLGQPIDGRGDVDSDTRRALELQAPSVVHRQGVKEPLQTGIKAIDAMTPIGRGQRQLIIGDRKTGKTAVCVDTILNQRQNWESGDPKKQVRCVYVAIGQKGTTIAAVRRTLEEGGAMDYTTIVAAAASESAGFKWLAPYTGSAIAQHWMYEGKHVLIIFDDLTKQAEAYRAISLLLRRPPGREAYPGDVFYLHSRLLERCAKLSDDLGGGSLTGLPIIETKANDISAYIPTNVISITDGQCFLETDLFNQGVRPAINVGVSVSRVGGAAQIKAMKEVAGSLRLDLSQYRELEAFAAFASDLDAASKAQLERGARLVELLKQPQSQPMPVEEQVVSIFLGTGGHLDSVPVEDVRRFETELLDHMRASEEEILTEIRDSQKLTEEAADKLTEVIKNFKKGFAATGGGSVVPDEHVEALDEDKLAKEAVKVKKPAPKKKK.

172–179 contributes to the ATP binding site; the sequence is GDRKTGKT.

It belongs to the ATPase alpha/beta chains family. As to quaternary structure, F-type ATPases have 2 components, CF(1) - the catalytic core - and CF(0) - the membrane proton channel. CF(1) has five subunits: alpha(3), beta(3), gamma(1), delta(1), epsilon(1). CF(0) has three main subunits: a(1), b(2) and c(9-12). The alpha and beta chains form an alternating ring which encloses part of the gamma chain. CF(1) is attached to CF(0) by a central stalk formed by the gamma and epsilon chains, while a peripheral stalk is formed by the delta and b chains.

The protein localises to the cell membrane. It carries out the reaction ATP + H2O + 4 H(+)(in) = ADP + phosphate + 5 H(+)(out). Its function is as follows. Produces ATP from ADP in the presence of a proton gradient across the membrane. The alpha chain is a regulatory subunit. This Mycobacterium tuberculosis (strain CDC 1551 / Oshkosh) protein is ATP synthase subunit alpha.